A 122-amino-acid chain; its full sequence is Large ribosomal subunit protein bL12 (122 aa).

The protein belongs to the bacterial ribosomal protein bL12 family. Homodimer. Part of the ribosomal stalk of the 50S ribosomal subunit. Forms a multimeric L10(L12)X complex, where L10 forms an elongated spine to which 2 to 4 L12 dimers bind in a sequential fashion. Binds GTP-bound translation factors.

In terms of biological role, forms part of the ribosomal stalk which helps the ribosome interact with GTP-bound translation factors. Is thus essential for accurate translation. In Clostridium botulinum (strain Langeland / NCTC 10281 / Type F), this protein is Large ribosomal subunit protein bL12.